A 364-amino-acid chain; its full sequence is MAHTWGPQRLAGGQPQANFEESTQGSIFTYTNSNSTRDPFEGPNYHIAPRWVYHLTSAWMVFVVIASVFTNGLVLAATMRFKKLRHPLNWILVNLAIADLAETIIASTISVVNQMYGYFVLGHPLCVVEGYTVSLCGITGLWSLAIISWERWMVVCKPFGNVRFDAKLATAGIAFSWIWAAVWTAPPIFGWSRYWPHGLKTSCGPDVFSGSSYPGVQSYMIVLMITCCFIPLSVIILCYLQVWLAIRAVAKQQKESESTQKAEKEVTRMVMVMIFAYCLCWGPYTFFACFAAAHPGYAFHPLVAALPAYFAKSATIYNPIIYVFMNRQFRNCILQLFGKKVDDSSELSSVSKTEASSVSSVSPA.

The Extracellular portion of the chain corresponds to 1–52 (MAHTWGPQRLAGGQPQANFEESTQGSIFTYTNSNSTRDPFEGPNYHIAPRWV). Ser-22 carries O-linked (GlcNAc) serine glycosylation. N-linked (GlcNAc...) asparagine glycosylation is present at Asn-34. A helical transmembrane segment spans residues 53–77 (YHLTSAWMVFVVIASVFTNGLVLAA). Residues 78–89 (TMRFKKLRHPLN) are Cytoplasmic-facing. A helical membrane pass occupies residues 90 to 115 (WILVNLAIADLAETIIASTISVVNQM). The Extracellular segment spans residues 116–129 (YGYFVLGHPLCVVE). Residues Cys-126 and Cys-203 are joined by a disulfide bond. The chain crosses the membrane as a helical span at residues 130-149 (GYTVSLCGITGLWSLAIISW). Residues 150–168 (ERWMVVCKPFGNVRFDAKL) are Cytoplasmic-facing. Residues 169 to 192 (ATAGIAFSWIWAAVWTAPPIFGWS) traverse the membrane as a helical segment. The Extracellular portion of the chain corresponds to 193–218 (RYWPHGLKTSCGPDVFSGSSYPGVQS). A helical transmembrane segment spans residues 219 to 246 (YMIVLMITCCFIPLSVIILCYLQVWLAI). Topologically, residues 247–268 (RAVAKQQKESESTQKAEKEVTR) are cytoplasmic. The helical transmembrane segment at 269–292 (MVMVMIFAYCLCWGPYTFFACFAA) threads the bilayer. The Extracellular portion of the chain corresponds to 293-300 (AHPGYAFH). The chain crosses the membrane as a helical span at residues 301–325 (PLVAALPAYFAKSATIYNPIIYVFM). The residue at position 312 (Lys-312) is an N6-(retinylidene)lysine. At 326–364 (NRQFRNCILQLFGKKVDDSSELSSVSKTEASSVSSVSPA) the chain is on the cytoplasmic side.

It belongs to the G-protein coupled receptor 1 family. Opsin subfamily. Post-translationally, phosphorylated on some or all of the serine and threonine residues present in the C-terminal region. In terms of tissue distribution, the three color pigments are found in the cone photoreceptor cells.

The protein localises to the membrane. Visual pigments are the light-absorbing molecules that mediate vision. They consist of an apoprotein, opsin, covalently linked to cis-retinal. In Capra hircus (Goat), this protein is Long-wave-sensitive opsin 1 (OPN1LW).